The sequence spans 147 residues: Large ribosomal subunit protein uL13 (147 aa).

The protein belongs to the universal ribosomal protein uL13 family. Part of the 50S ribosomal subunit.

Functionally, this protein is one of the early assembly proteins of the 50S ribosomal subunit, although it is not seen to bind rRNA by itself. It is important during the early stages of 50S assembly. In Nocardioides sp. (strain ATCC BAA-499 / JS614), this protein is Large ribosomal subunit protein uL13.